The primary structure comprises 428 residues: Anaerobic glycerol-3-phosphate dehydrogenase subunit B (428 aa).

Belongs to the anaerobic G-3-P dehydrogenase subunit B family. Composed of a catalytic GlpA/B dimer and of membrane bound GlpC. Requires FMN as cofactor.

The enzyme catalyses a quinone + sn-glycerol 3-phosphate = dihydroxyacetone phosphate + a quinol. Its pathway is polyol metabolism; glycerol degradation via glycerol kinase pathway; glycerone phosphate from sn-glycerol 3-phosphate (anaerobic route): step 1/1. Its function is as follows. Conversion of glycerol 3-phosphate to dihydroxyacetone. Uses fumarate or nitrate as electron acceptor. This chain is Anaerobic glycerol-3-phosphate dehydrogenase subunit B, found in Actinobacillus pleuropneumoniae serotype 5b (strain L20).